A 202-amino-acid chain; its full sequence is Protein Thf1 (202 aa).

Residues I174–K202 adopt a coiled-coil conformation.

The protein belongs to the THF1 family.

May be involved in photosynthetic membrane biogenesis. In Prochlorococcus marinus subsp. pastoris (strain CCMP1986 / NIES-2087 / MED4), this protein is Protein Thf1.